The following is a 950-amino-acid chain: Sodium/calcium exchanger Calx (950 aa).

The N-terminal stretch at 1 to 22 is a signal peptide; it reads MQLLLKSIFTCALFVIFVYATA. Topologically, residues 23–120 are extracellular; sequence QSLLKVQETE…PQRNISVGDR (98 aa). N-linked (GlcNAc...) asparagine glycosylation is found at asparagine 39, asparagine 47, and asparagine 114. Residues 121 to 141 form a helical membrane-spanning segment; that stretch reads LVRGFVYFVLLIYLFVGVSII. Residues 142–179 are Cytoplasmic-facing; that stretch reads ADRFMAAIEAITSIERAVVVKGPNNTKQVMHVRIWNET. A helical membrane pass occupies residues 180–200; that stretch reads VANLTLMALGSSAPEILLSVI. Residues 201–216 are Extracellular-facing; sequence EIYAKDFESGDLGPGT. The helical transmembrane segment at 217–237 threads the bilayer; sequence IVGSAAYNLFMIIAVCMIWIP. Residues 238 to 257 lie on the Cytoplasmic side of the membrane; sequence AGEVRRIRHLRVFFVTALFS. Helical transmembrane passes span 258-278 and 279-299; these read VFAYVWLWLILSVFTPGVILV and WEAIVTLLFFPLTVLWAYIAE. At 300–749 the chain is on the cytoplasmic side; that stretch reads RRLLVYKYMD…NDDEEEEVPS (450 aa). The interval 301–318 is corresponds to the exchanger inhibitory peptide (XIP) found in other sodium/calcium exchange proteins and thought to be involved in calmodulin binding; sequence RLLVYKYMDKNYRVNKRG. The region spanning 440–551 is the Calx-beta 1 domain; that stretch reads DPIRMYFEPG…MIATVMILDD (112 aa). 10 residues coordinate Ca(2+): glutamate 455, aspartate 490, aspartate 515, aspartate 516, valine 518, glutamate 520, glutamate 523, aspartate 550, aspartate 551, and aspartate 552. Positions 555–694 constitute a Calx-beta 2 domain; the sequence is GIFAFTDSVF…LTTAYVRIRE (140 aa). A helical transmembrane segment spans residues 750-770; that stretch reads CFSYVSHFVCLFWKVLFAFVP. Residues 771–775 lie on the Extracellular side of the membrane; the sequence is PTDIC. Residues 776 to 796 traverse the membrane as a helical segment; the sequence is GGYVTFVVSIFVIGVITAIIG. Over 797–813 the chain is Cytoplasmic; the sequence is DAASYFGCALNIKDSVT. A helical transmembrane segment spans residues 814-834; it reads AILFVALGTSIPDTFASMIAA. The Extracellular segment spans residues 835 to 848; that stretch reads KHDEGADNCIGNVT. Asparagine 846 carries an N-linked (GlcNAc...) asparagine glycan. The chain crosses the membrane as a helical span at residues 849–869; that stretch reads GSNAVNVFLGIGLAWTIAAVY. The Cytoplasmic portion of the chain corresponds to 870–883; it reads HSSHGMTFNVEPGT. Residues 884 to 904 traverse the membrane as a helical segment; the sequence is IGFAVALFCGEALIAIMLIMF. Over 905 to 923 the chain is Extracellular; the sequence is RRWHKGIGAELGGPKVSKY. The helical transmembrane segment at 924 to 944 threads the bilayer; that stretch reads ISAAILVFLWVFYVVICILEA. The Cytoplasmic segment spans residues 945 to 950; it reads YDVIRV.

The protein belongs to the Ca(2+):cation antiporter (CaCA) (TC 2.A.19) family. SLC8 subfamily. Ubiquitously expressed with higher expression in head compared to body (at protein level). Enriched in photoreceptor cells of the eye (at protein level). In the adult head, expressed in retina, optic ganglia and all neuronal tissues.

It is found in the cell membrane. The protein resides in the cell projection. It localises to the rhabdomere membrane. The enzyme catalyses Ca(2+)(in) + 3 Na(+)(out) = Ca(2+)(out) + 3 Na(+)(in). With respect to regulation, activated by a Na(+) electrochemical gradient but also undergoes Na(2+)-dependent inactivation. Inhibited by micromolar levels of cytoplasmic Ca(2+), which is the opposite of most characterized mammalian homologs. Its activity is regulated as follows. Exhibits greater extent of inhibition by Ca(2+) than isoform D/1.2. Exhibits greater Na(2+)-dependent inactivation than isoform A/1.1, probably due to greater stability of the inactive Na(2+)-bound form. Its function is as follows. Na(+)/Ca(2+) antiporter that couples the energy of a Na(+) electrochemical gradient to the movement of Ca(2+) against an electrochemical gradient across a membrane, which contributes to the regulation of cytoplasmic Ca(2+) levels. Mediates Na(+)/Ca(2+) exchange in photoreceptor cells and involved in controlling Ca(2+) levels during phototransduction, affecting magnitude of the photoresponse, activation kinetics, signal amplification, response termination, and light adaptation. Light induced depolarization of photoreceptor cells, resulting in Na(+) and Ca(2+) entry through trp/transient receptor potential protein channels, is essential for photoreceptor cell function but may result in toxic levels of cytoplasmic Ca(2+). Na(+)/Ca(2+) antiporter regulation of Ca(2+) levels protects photoreceptor cells from light-dependent retinal degeneration. The polypeptide is Sodium/calcium exchanger Calx (Drosophila melanogaster (Fruit fly)).